A 368-amino-acid polypeptide reads, in one-letter code: MHPDVIADLNALDTTLRTCESVVDVEELRRRIDELEHQAADPGLWNDQEHAQQVTSQLSHAQAELRRIVALRERLDEMPILYELAEDEGPDAVADADAERASLRDDIAAMEVKTMLSGEYDERDALINIRSGAGGIDAADWAEMLMRMYIRWAEKHDYGVEVYDTSYAEEAGLKSATFAIKGPYTYGTLSVEMGTHRLVRISPFDNQGRRQTSFAEVEVLPVVETTDHIEINENDIRVDVYRSSGPGGQSVNTTDSAVRLTHIPTGIVVTCQNEKSQLQNKVSAMRVLQAKLLAVKRQEERAEMDALKGDSGSSWGNQMRSYVLHPYQMVKDLRTEYEVNNPSAVLDGDIDGFLEAGIRWRMSENQSA.

Glutamine 249 is subject to N5-methylglutamine.

Belongs to the prokaryotic/mitochondrial release factor family. In terms of processing, methylated by PrmC. Methylation increases the termination efficiency of RF2.

The protein resides in the cytoplasm. In terms of biological role, peptide chain release factor 2 directs the termination of translation in response to the peptide chain termination codons UGA and UAA. The chain is Peptide chain release factor 2 from Rhodococcus erythropolis (strain PR4 / NBRC 100887).